Here is a 554-residue protein sequence, read N- to C-terminus: Phenylalanine--tRNA ligase beta subunit (554 aa).

The 78-residue stretch at 274 to 351 (LTPDSAEITI…INYGYENFNG (78 aa)) folds into the B5 domain. Mg(2+)-binding residues include D329, D335, and D339.

Belongs to the phenylalanyl-tRNA synthetase beta subunit family. Type 2 subfamily. In terms of assembly, tetramer of two alpha and two beta subunits. It depends on Mg(2+) as a cofactor.

It localises to the cytoplasm. The enzyme catalyses tRNA(Phe) + L-phenylalanine + ATP = L-phenylalanyl-tRNA(Phe) + AMP + diphosphate + H(+). The protein is Phenylalanine--tRNA ligase beta subunit of Methanococcus aeolicus (strain ATCC BAA-1280 / DSM 17508 / OCM 812 / Nankai-3).